The following is a 571-amino-acid chain: RNA polymerase sigma factor SigA (571 aa).

Residues 321-391 form a sigma-70 factor domain-2 region; it reads MVESNLRLVI…TRAIADQART (71 aa). Residues 345-348 carry the Interaction with polymerase core subunit RpoC motif; that stretch reads DLIQ. The sigma-70 factor domain-3 stretch occupies residues 400-476; the sequence is ETINKVLRGA…DTAVESPAEA (77 aa). The interval 489-542 is sigma-70 factor domain-4; sequence VLKTLTDRERFVLIHRFGLLDGRPKTLEEVGSAFNVTRERIRQIEAKALRKMRH. Residues 515-534 constitute a DNA-binding region (H-T-H motif); it reads LEEVGSAFNVTRERIRQIEA.

This sequence belongs to the sigma-70 factor family. RpoD/SigA subfamily. Interacts transiently with the RNA polymerase catalytic core.

The protein resides in the cytoplasm. Functionally, sigma factors are initiation factors that promote the attachment of RNA polymerase to specific initiation sites and are then released. This sigma factor is the primary sigma factor during exponential growth. The protein is RNA polymerase sigma factor SigA of Chlamydia trachomatis serovar D (strain ATCC VR-885 / DSM 19411 / UW-3/Cx).